The sequence spans 158 residues: Major latex protein 22 (158 aa).

The protein belongs to the MLP family. As to expression, laticifer.

It localises to the vacuole. The protein localises to the cytoplasmic vesicle. In terms of biological role, not known; MLPs constitute up to 50% of the soluble latex protein. In Papaver somniferum (Opium poppy), this protein is Major latex protein 22 (MLP22).